Reading from the N-terminus, the 254-residue chain is Alcohol dehydrogenase (254 aa).

10–33 contributes to the NAD(+) binding site; sequence FVAGLGGIGLDTSKGIVKAGPKNL. Residue S138 participates in substrate binding. Y151 acts as the Proton acceptor in catalysis.

The protein belongs to the short-chain dehydrogenases/reductases (SDR) family. As to quaternary structure, homodimer.

It carries out the reaction a primary alcohol + NAD(+) = an aldehyde + NADH + H(+). The catalysed reaction is a secondary alcohol + NAD(+) = a ketone + NADH + H(+). The sequence is that of Alcohol dehydrogenase (Adh) from Drosophila immigrans (Fruit fly).